Here is a 367-residue protein sequence, read N- to C-terminus: GTP cyclohydrolase FolE2 (367 aa).

The protein belongs to the GTP cyclohydrolase IV family.

It carries out the reaction GTP + H2O = 7,8-dihydroneopterin 3'-triphosphate + formate + H(+). The protein operates within cofactor biosynthesis; 7,8-dihydroneopterin triphosphate biosynthesis; 7,8-dihydroneopterin triphosphate from GTP: step 1/1. Its function is as follows. Converts GTP to 7,8-dihydroneopterin triphosphate. The chain is GTP cyclohydrolase FolE2 from Roseobacter denitrificans (strain ATCC 33942 / OCh 114) (Erythrobacter sp. (strain OCh 114)).